The primary structure comprises 620 residues: Chaperone protein HscA homolog (620 aa).

This sequence belongs to the heat shock protein 70 family.

In terms of biological role, chaperone involved in the maturation of iron-sulfur cluster-containing proteins. Has a low intrinsic ATPase activity which is markedly stimulated by HscB. The polypeptide is Chaperone protein HscA homolog (Pseudomonas putida (strain ATCC 47054 / DSM 6125 / CFBP 8728 / NCIMB 11950 / KT2440)).